The primary structure comprises 297 residues: Bifunctional protein FolD (297 aa).

NADP(+) is bound by residues 169-171 (GRS), S196, and I237.

The protein belongs to the tetrahydrofolate dehydrogenase/cyclohydrolase family. In terms of assembly, homodimer.

The catalysed reaction is (6R)-5,10-methylene-5,6,7,8-tetrahydrofolate + NADP(+) = (6R)-5,10-methenyltetrahydrofolate + NADPH. The enzyme catalyses (6R)-5,10-methenyltetrahydrofolate + H2O = (6R)-10-formyltetrahydrofolate + H(+). The protein operates within one-carbon metabolism; tetrahydrofolate interconversion. Its function is as follows. Catalyzes the oxidation of 5,10-methylenetetrahydrofolate to 5,10-methenyltetrahydrofolate and then the hydrolysis of 5,10-methenyltetrahydrofolate to 10-formyltetrahydrofolate. This is Bifunctional protein FolD from Salinibacter ruber (strain DSM 13855 / M31).